The primary structure comprises 322 residues: Breast cancer metastasis-suppressor 1-like protein (322 aa).

The segment covering 1-16 (MPVHSREKKESNHNDM) has biased composition (basic and acidic residues). The disordered stretch occupies residues 1 to 56 (MPVHSREKKESNHNDMEVDYPENEGTSSEEDDSDSSSGSEEGDSSEMDDEDCERRR). Acidic residues predominate over residues 17 to 51 (EVDYPENEGTSSEEDDSDSSSGSEEGDSSEMDDED). 2 coiled-coil regions span residues 50-82 (EDCE…KERL) and 147-178 (EKLL…ITSE).

It belongs to the BRMS1 family.

It localises to the nucleus. Involved in the histone deacetylase (HDAC1)-dependent transcriptional repression activity. The protein is Breast cancer metastasis-suppressor 1-like protein (brms1l) of Xenopus tropicalis (Western clawed frog).